The following is a 193-amino-acid chain: Ion-translocating oxidoreductase complex subunit A (193 aa).

Transmembrane regions (helical) follow at residues 5 to 25, 47 to 67, 72 to 92, 102 to 122, 134 to 154, and 171 to 191; these read LLLF…FLGL, FVMT…LVPL, LRTL…EMVV, LLGI…VALL, AVYG…FAAI, and SIAL…TGLV.

Belongs to the NqrDE/RnfAE family. As to quaternary structure, the complex is composed of six subunits: RnfA, RnfB, RnfC, RnfD, RnfE and RnfG.

It is found in the cell inner membrane. Functionally, part of a membrane-bound complex that couples electron transfer with translocation of ions across the membrane. In Serratia proteamaculans (strain 568), this protein is Ion-translocating oxidoreductase complex subunit A.